Here is a 198-residue protein sequence, read N- to C-terminus: Recombination protein RecR (198 aa).

Residues 57-72 (CSVCGRLTDDDPCIIC) form a C4-type zinc finger. The Toprim domain occupies 80–175 (TKILVVEDSK…KVTRLARGLA (96 aa)).

It belongs to the RecR family.

In terms of biological role, may play a role in DNA repair. It seems to be involved in an RecBC-independent recombinational process of DNA repair. It may act with RecF and RecO. The polypeptide is Recombination protein RecR (Streptococcus thermophilus (strain CNRZ 1066)).